A 103-amino-acid chain; its full sequence is Small ribosomal subunit protein bS18c (103 aa).

This sequence belongs to the bacterial ribosomal protein bS18 family. Part of the 30S ribosomal subunit.

Its subcellular location is the plastid. It is found in the chloroplast. This chain is Small ribosomal subunit protein bS18c, found in Buxus microphylla (Littleleaf boxwood).